A 250-amino-acid chain; its full sequence is Imidazole glycerol phosphate synthase subunit HisF (250 aa).

Active-site residues include aspartate 11 and aspartate 130.

It belongs to the HisA/HisF family. Heterodimer of HisH and HisF.

The protein localises to the cytoplasm. The catalysed reaction is 5-[(5-phospho-1-deoxy-D-ribulos-1-ylimino)methylamino]-1-(5-phospho-beta-D-ribosyl)imidazole-4-carboxamide + L-glutamine = D-erythro-1-(imidazol-4-yl)glycerol 3-phosphate + 5-amino-1-(5-phospho-beta-D-ribosyl)imidazole-4-carboxamide + L-glutamate + H(+). It functions in the pathway amino-acid biosynthesis; L-histidine biosynthesis; L-histidine from 5-phospho-alpha-D-ribose 1-diphosphate: step 5/9. In terms of biological role, IGPS catalyzes the conversion of PRFAR and glutamine to IGP, AICAR and glutamate. The HisF subunit catalyzes the cyclization activity that produces IGP and AICAR from PRFAR using the ammonia provided by the HisH subunit. This chain is Imidazole glycerol phosphate synthase subunit HisF, found in Elusimicrobium minutum (strain Pei191).